Here is a 168-residue protein sequence, read N- to C-terminus: Cell division inhibitor SulA (168 aa).

The interval alanine 106–tyrosine 112 is ftsZ binding. Residues lysine 161–histidine 168 form a lon protease binding region.

It belongs to the SulA family. Interacts with FtsZ. Post-translationally, is rapidly cleaved and degraded by the Lon protease once DNA damage is repaired.

In terms of biological role, component of the SOS system and an inhibitor of cell division. Accumulation of SulA causes rapid cessation of cell division and the appearance of long, non-septate filaments. In the presence of GTP, binds a polymerization-competent form of FtsZ in a 1:1 ratio, thus inhibiting FtsZ polymerization and therefore preventing it from participating in the assembly of the Z ring. This mechanism prevents the premature segregation of damaged DNA to daughter cells during cell division. The chain is Cell division inhibitor SulA from Yersinia pseudotuberculosis serotype O:1b (strain IP 31758).